A 276-amino-acid polypeptide reads, in one-letter code: Large ribosomal subunit protein uL2 (276 aa).

A disordered region spans residues 224-265 (GTAMNPIDHPHGGGEGKNFGKHPVSPWGVQTKGKRTRSNKRT).

This sequence belongs to the universal ribosomal protein uL2 family. As to quaternary structure, part of the 50S ribosomal subunit. Forms a bridge to the 30S subunit in the 70S ribosome.

One of the primary rRNA binding proteins. Required for association of the 30S and 50S subunits to form the 70S ribosome, for tRNA binding and peptide bond formation. It has been suggested to have peptidyltransferase activity; this is somewhat controversial. Makes several contacts with the 16S rRNA in the 70S ribosome. This Blochmanniella floridana protein is Large ribosomal subunit protein uL2.